We begin with the raw amino-acid sequence, 372 residues long: Protein phosphatase Mn(2+)-dependent 1K (372 aa).

The transit peptide at 1-29 (MSTAALITLVRSGGNQVRRRVLLSSRLLQ) directs the protein to the mitochondrion. A disordered region spans residues 34–55 (VTPTCHSSTSEPRCSRFDPDGS). The tract at residues 46 to 61 (RCSRFDPDGSGSPATW) is critical for association with the BCKDH complex. The region spanning 94 to 346 (NVGCASQIGK…DNSTAVVVPF (253 aa)) is the PPM-type phosphatase domain. Mn(2+) is bound by residues Asp-127 and Gly-128. Ser-248 carries the phosphoserine modification. Asp-298 and Asp-337 together coordinate Mn(2+).

The protein belongs to the PP2C family. Monomer. Interacts with E1 and E2 components of the branched-chain alpha-ketoacid dehydrogenase (BCKDH) complex; this interaction requires colocalization in mitochondria. Interacts with BCKDHA but not with BCKDHB of the E1 component. Interacts with the 24-meric E2 core composed of DBT monomers with a 24:1 stoichiometry; the N-terminal region (residues 49-61) of PPM1K and C-terminal linker of the lipoyl domain of DBT (residues 145-160) are critical for this interaction, whereas the lipoyl prosthetic group is dispensable. Competes with BCKDK for binding to the E2 core; this interaction is modulated by branched-chain alpha-keto acids. At steady state, BCKDH holoenzyme preferentially binds BCKDK and BCKDHA is phosphorylated. In response to high levels of branched-chain alpha-keto acids, the inhibitory BCKDK is replaced by activating PPM1K leading to BCKDHA dephosphorylation and BCAA degradation. Mn(2+) serves as cofactor.

It is found in the mitochondrion matrix. The enzyme catalyses O-phospho-L-seryl-[3-methyl-2-oxobutanoate dehydrogenase] + H2O = L-seryl-[3-methyl-2-oxobutanoate dehydrogenase] + phosphate. The catalysed reaction is O-phospho-L-seryl-[protein] + H2O = L-seryl-[protein] + phosphate. The protein operates within protein modification. With respect to regulation, up-regulated upon interaction with the 24-meric DBT/E2 core of the BCKDH complex. Inhibited by Mg(2+) and Ca(2+) ions likely by competing with Mn(2+) ions for binding to the same metal-binding sites. Serine/threonine-protein phosphatase component of macronutrients metabolism. Forms a functional kinase and phosphatase pair with BCKDK, serving as a metabolic regulatory node that coordinates branched-chain amino acids (BCAAs) with glucose and lipid metabolism via two distinct phosphoprotein targets: mitochondrial BCKDHA subunit of the branched-chain alpha-ketoacid dehydrogenase (BCKDH) complex and cytosolic ACLY, a lipogenic enzyme of Krebs cycle. At high levels of branched-chain ketoacids, dephosphorylates and activates mitochondrial BCKDH complex, a multisubunit complex consisting of three multimeric components each involved in different steps of BCAA catabolism: E1 composed of BCKDHA and BCKDHB, E2 core composed of DBT monomers, and E3 composed of DLD monomers. Tightly associates with the E2 component of BCKDH complex and dephosphorylates BCKDHA on Ser-337. Regulates the reversible phosphorylation of ACLY in response to changes in cellular carbohydrate abundance such as occurs during fasting to feeding metabolic transition. At fasting state, appears to dephosphorylate ACLY on Ser-455 and inactivate it. Refeeding stimulates MLXIPL/ChREBP transcription factor, leading to increased BCKDK to PPM1K expression ratio, phosphorylation and activation of ACLY that ultimately results in the generation of malonyl-CoA and oxaloacetate immediate substrates of de novo lipogenesis and gluconeogenesis, respectively. Recognizes phosphosites having SxS or RxxS motifs and strictly depends on Mn(2+) ions for the phosphatase activity. Regulates Ca(2+)-induced opening of mitochondrial transition pore and apoptotic cell death. This is Protein phosphatase Mn(2+)-dependent 1K from Homo sapiens (Human).